Here is a 161-residue protein sequence, read N- to C-terminus: Pro-corazonin (161 aa).

The first 20 residues, 1 to 20, serve as a signal peptide directing secretion; sequence MMRLLLLPLFLFTLSMACMG. Q21 bears the Pyrrolidone carboxylic acid mark. Residue N31 is modified to Asparagine amide. Positions 70 to 161 are excised as a propeptide; it reads LERCLAQLQR…SGEPSVFGKH (92 aa). Disordered stretches follow at residues 93 to 125 and 142 to 161; these read NANR…TPIQ and VAGS…FGKH. The segment covering 102–117 has biased composition (low complexity); that stretch reads SDSGSSRNRANNNNEN.

Belongs to the corazonin family.

The protein localises to the secreted. Cardioactive peptide. Corazonin is probably involved in the physiological regulation of the heart beat. Clock (Clk) and cycle (cyc) proteins negatively regulate Crz transcription in a cell-specific manner. This chain is Pro-corazonin, found in Drosophila pseudoobscura pseudoobscura (Fruit fly).